The chain runs to 228 residues: Octanoyltransferase (228 aa).

Positions 31 to 212 (GETDGILILL…KFSEVFGIHF (182 aa)) constitute a BPL/LPL catalytic domain. Residues 76 to 83 (RGGKITFH), 143 to 145 (AIG), and 156 to 158 (GIA) contribute to the substrate site. Cys174 acts as the Acyl-thioester intermediate in catalysis.

This sequence belongs to the LipB family.

The protein localises to the cytoplasm. It catalyses the reaction octanoyl-[ACP] + L-lysyl-[protein] = N(6)-octanoyl-L-lysyl-[protein] + holo-[ACP] + H(+). The protein operates within protein modification; protein lipoylation via endogenous pathway; protein N(6)-(lipoyl)lysine from octanoyl-[acyl-carrier-protein]: step 1/2. Functionally, catalyzes the transfer of endogenously produced octanoic acid from octanoyl-acyl-carrier-protein onto the lipoyl domains of lipoate-dependent enzymes. Lipoyl-ACP can also act as a substrate although octanoyl-ACP is likely to be the physiological substrate. The sequence is that of Octanoyltransferase from Thermoanaerobacter sp. (strain X514).